The chain runs to 129 residues: Snaclec coagulation factor IX-binding protein subunit A (129 aa).

Residues 1–129 (DCPSGWSSYE…GQQNPFVCEA (129 aa)) form the C-type lectin domain. Disulfide bonds link Cys-2–Cys-13, Cys-30–Cys-127, and Cys-102–Cys-119. Ca(2+) is bound by residues Ser-41, Glu-43, and Glu-47. Glu-128 lines the Ca(2+) pocket.

This sequence belongs to the snaclec family. In terms of assembly, heterodimer of subunits A and B; disulfide-linked. In terms of tissue distribution, expressed by the venom gland.

It localises to the secreted. In terms of biological role, anticoagulant protein which binds to the gamma-carboxyglutamic acid-domain regions of factor IX (F9) (but not factor X) in the presence of calcium with a 1 to 1 stoichiometry. This is Snaclec coagulation factor IX-binding protein subunit A from Protobothrops flavoviridis (Habu).